A 166-amino-acid polypeptide reads, in one-letter code: Interferon gamma (166 aa).

Residues 1–23 form the signal peptide; that stretch reads MNYTSFILAFQLCAILGSSTYYC. Q24 is subject to Pyrrolidone carboxylic acid. N-linked (GlcNAc...) asparagine glycans are attached at residues N39 and N106. The disordered stretch occupies residues 147-166; the sequence is ANLRKRKRSQNPFRGRRALQ. Residues 148–166 are compositionally biased toward basic residues; that stretch reads NLRKRKRSQNPFRGRRALQ.

This sequence belongs to the type II (or gamma) interferon family. In terms of assembly, homodimer. Interacts with IFNGR1 (via extracellular domain); this interaction promotes IFNGR1 dimerization. Released primarily from activated T lymphocytes.

It is found in the secreted. Its function is as follows. Type II interferon produced by immune cells such as T-cells and NK cells that plays crucial roles in antimicrobial, antiviral, and antitumor responses by activating effector immune cells and enhancing antigen presentation. Primarily signals through the JAK-STAT pathway after interaction with its receptor IFNGR1 to affect gene regulation. Upon IFNG binding, IFNGR1 intracellular domain opens out to allow association of downstream signaling components JAK2, JAK1 and STAT1, leading to STAT1 activation, nuclear translocation and transcription of IFNG-regulated genes. Many of the induced genes are transcription factors such as IRF1 that are able to further drive regulation of a next wave of transcription. Plays a role in class I antigen presentation pathway by inducing a replacement of catalytic proteasome subunits with immunoproteasome subunits. In turn, increases the quantity, quality, and repertoire of peptides for class I MHC loading. Increases the efficiency of peptide generation also by inducing the expression of activator PA28 that associates with the proteasome and alters its proteolytic cleavage preference. Up-regulates as well MHC II complexes on the cell surface by promoting expression of several key molecules such as cathepsins B/CTSB, H/CTSH, and L/CTSL. Participates in the regulation of hematopoietic stem cells during development and under homeostatic conditions by affecting their development, quiescence, and differentiation. The polypeptide is Interferon gamma (IFNG) (Equus caballus (Horse)).